A 95-amino-acid chain; its full sequence is Small ribosomal subunit protein bS16 (95 aa).

This sequence belongs to the bacterial ribosomal protein bS16 family.

This Thermotoga maritima (strain ATCC 43589 / DSM 3109 / JCM 10099 / NBRC 100826 / MSB8) protein is Small ribosomal subunit protein bS16.